The chain runs to 160 residues: SsrA-binding protein (160 aa).

A disordered region spans residues 131–160 (KKEYDKRHTERERDSDRELQRAVRTKGKED).

The protein belongs to the SmpB family.

The protein localises to the cytoplasm. Required for rescue of stalled ribosomes mediated by trans-translation. Binds to transfer-messenger RNA (tmRNA), required for stable association of tmRNA with ribosomes. tmRNA and SmpB together mimic tRNA shape, replacing the anticodon stem-loop with SmpB. tmRNA is encoded by the ssrA gene; the 2 termini fold to resemble tRNA(Ala) and it encodes a 'tag peptide', a short internal open reading frame. During trans-translation Ala-aminoacylated tmRNA acts like a tRNA, entering the A-site of stalled ribosomes, displacing the stalled mRNA. The ribosome then switches to translate the ORF on the tmRNA; the nascent peptide is terminated with the 'tag peptide' encoded by the tmRNA and targeted for degradation. The ribosome is freed to recommence translation, which seems to be the essential function of trans-translation. The polypeptide is SsrA-binding protein (Pseudomonas fluorescens (strain ATCC BAA-477 / NRRL B-23932 / Pf-5)).